The primary structure comprises 179 residues: Large ribosomal subunit protein uL5 (179 aa).

This sequence belongs to the universal ribosomal protein uL5 family. Part of the 50S ribosomal subunit; part of the 5S rRNA/L5/L18/L25 subcomplex. Contacts the 5S rRNA and the P site tRNA. Forms a bridge to the 30S subunit in the 70S ribosome.

This is one of the proteins that bind and probably mediate the attachment of the 5S RNA into the large ribosomal subunit, where it forms part of the central protuberance. In the 70S ribosome it contacts protein S13 of the 30S subunit (bridge B1b), connecting the 2 subunits; this bridge is implicated in subunit movement. Contacts the P site tRNA; the 5S rRNA and some of its associated proteins might help stabilize positioning of ribosome-bound tRNAs. In Vesicomyosocius okutanii subsp. Calyptogena okutanii (strain HA), this protein is Large ribosomal subunit protein uL5.